The chain runs to 154 residues: 6,7-dimethyl-8-ribityllumazine synthase (154 aa).

5-amino-6-(D-ribitylamino)uracil is bound by residues W22, 56–58 (AWE), and 80–82 (CVV). 85–86 (DT) provides a ligand contact to (2S)-2-hydroxy-3-oxobutyl phosphate. The active-site Proton donor is the H88. N113 contacts 5-amino-6-(D-ribitylamino)uracil. Residue R127 coordinates (2S)-2-hydroxy-3-oxobutyl phosphate.

This sequence belongs to the DMRL synthase family. Forms an icosahedral capsid composed of 60 subunits, arranged as a dodecamer of pentamers.

The enzyme catalyses (2S)-2-hydroxy-3-oxobutyl phosphate + 5-amino-6-(D-ribitylamino)uracil = 6,7-dimethyl-8-(1-D-ribityl)lumazine + phosphate + 2 H2O + H(+). The protein operates within cofactor biosynthesis; riboflavin biosynthesis; riboflavin from 2-hydroxy-3-oxobutyl phosphate and 5-amino-6-(D-ribitylamino)uracil: step 1/2. Catalyzes the formation of 6,7-dimethyl-8-ribityllumazine by condensation of 5-amino-6-(D-ribitylamino)uracil with 3,4-dihydroxy-2-butanone 4-phosphate. This is the penultimate step in the biosynthesis of riboflavin. The polypeptide is 6,7-dimethyl-8-ribityllumazine synthase (Xylella fastidiosa (strain 9a5c)).